We begin with the raw amino-acid sequence, 338 residues long: Thiamine thiazole synthase (338 aa).

Residues 1 to 43 are disordered; the sequence is MSPVATESMYKPTTINQTAHQQAMDPLKSKQQSNATVNKPAFK. Over residues 11–21 the composition is skewed to polar residues; sequence KPTTINQTAHQ. Substrate-binding positions include A91, 112-113, G120, and C185; that span reads ES. C221 carries the post-translational modification 2,3-didehydroalanine (Cys). Substrate is bound by residues D223, H238, M290, and 300-302; that span reads RMG.

Belongs to the THI4 family. In terms of assembly, homooctamer. Requires Fe cation as cofactor. Post-translationally, during the catalytic reaction, a sulfide is transferred from Cys-221 to a reaction intermediate, generating a dehydroalanine residue. Highly expressed in haustoria, and only in low amounts in intercellular hyphae. Found in the basal hyphae of the uredia, but not in the pedicels and only at very low levels in uredospores.

The protein localises to the cytoplasm. It is found in the nucleus. It carries out the reaction [ADP-thiazole synthase]-L-cysteine + glycine + NAD(+) = [ADP-thiazole synthase]-dehydroalanine + ADP-5-ethyl-4-methylthiazole-2-carboxylate + nicotinamide + 3 H2O + 2 H(+). Its function is as follows. Involved in biosynthesis of the thiamine precursor thiazole. Catalyzes the conversion of NAD and glycine to adenosine diphosphate 5-(2-hydroxyethyl)-4-methylthiazole-2-carboxylic acid (ADT), an adenylated thiazole intermediate. The reaction includes an iron-dependent sulfide transfer from a conserved cysteine residue of the protein to a thiazole intermediate. The enzyme can only undergo a single turnover, which suggests it is a suicide enzyme. May have additional roles in adaptation to various stress conditions and in DNA damage tolerance. In Uromyces fabae (Rust fungus), this protein is Thiamine thiazole synthase (THI2).